Reading from the N-terminus, the 359-residue chain is tRNA-specific 2-thiouridylase MnmA (359 aa).

Residues 9–16 (GLSGGVDS) and methionine 35 contribute to the ATP site. Residues 95–97 (NPD) are interaction with target base in tRNA. Cysteine 100 acts as the Nucleophile in catalysis. A disulfide bond links cysteine 100 and cysteine 197. Position 124 (glycine 124) interacts with ATP. The interval 147-149 (KDQ) is interaction with tRNA. The Cysteine persulfide intermediate role is filled by cysteine 197. The tract at residues 309–310 (RY) is interaction with tRNA.

The protein belongs to the MnmA/TRMU family.

It is found in the cytoplasm. It carries out the reaction S-sulfanyl-L-cysteinyl-[protein] + uridine(34) in tRNA + AH2 + ATP = 2-thiouridine(34) in tRNA + L-cysteinyl-[protein] + A + AMP + diphosphate + H(+). Catalyzes the 2-thiolation of uridine at the wobble position (U34) of tRNA, leading to the formation of s(2)U34. The sequence is that of tRNA-specific 2-thiouridylase MnmA from Cupriavidus metallidurans (strain ATCC 43123 / DSM 2839 / NBRC 102507 / CH34) (Ralstonia metallidurans).